Here is a 503-residue protein sequence, read N- to C-terminus: SWI/SNF and RSC complexes subunit ssr2 (503 aa).

An SWIRM domain is found at 18–115 (IIVPSYAGWF…YQIDPETRPA (98 aa)). Ser175 is modified (phosphoserine). The segment at 188–242 (RVDKVCFTCGVNCSQTWYHNLKNKKYDICPNCYKQGRFSSSFNSSDFLCMDAIDF) adopts a ZZ-type; degenerate zinc-finger fold. Residues Cys193, Cys196, Cys216, and Cys219 each contribute to the Zn(2+) site. The SANT domain occupies 245–296 (DEEKPWSNQETLLLLEAIETYGDDWNQIALHVGSRTKEQCLIHFLQIPIEDP). Ser306 is modified (phosphoserine).

The protein belongs to the SMARCC family. In terms of assembly, component of the RSC complex composed of at least arp9, arp42, rsc1, rsc4, rsc7, rsc9, rsc58, sfh1, snf21, ssr1, ssr2, ssr3 and ssr4. The complex interacts with histone and histone variant components of centromeric chromatin. Component of the SWI/SNF global transcription activator complex composed of at least arp9, arp42, snf5, snf22, snf30, sbf59, sol1, ssr1, ssr2, ssr3, ssr4 and tfg3.

It is found in the cytoplasm. The protein localises to the nucleus. Its function is as follows. Component of the chromatin structure remodeling complex (RSC), which is involved in transcription regulation and nucleosome positioning. Controls particularly membrane and organelle development genes. Part of the SWI/SNF complex, an ATP-dependent chromatin remodeling complex, required for the positive and negative regulation of gene expression of a large number of genes. It changes chromatin structure by altering DNA-histone contacts within a nucleosome, leading eventually to a change in nucleosome position, thus facilitating or repressing binding of gene-specific transcription factors. This is SWI/SNF and RSC complexes subunit ssr2 (ssr2) from Schizosaccharomyces pombe (strain 972 / ATCC 24843) (Fission yeast).